A 413-amino-acid chain; its full sequence is CinA-like protein (413 aa).

It belongs to the CinA family.

This is CinA-like protein from Desulfosudis oleivorans (strain DSM 6200 / JCM 39069 / Hxd3) (Desulfococcus oleovorans).